We begin with the raw amino-acid sequence, 431 residues long: Adenylosuccinate synthetase (431 aa).

Residues 13 to 19 and 41 to 43 contribute to the GTP site; these read GDEGKGK and GHT. Asp-14 serves as the catalytic Proton acceptor. Positions 14 and 41 each coordinate Mg(2+). Residues 14 to 17, 39 to 42, Thr-130, Arg-144, Gln-225, Thr-240, and Arg-304 contribute to the IMP site; these read DEGK and NAGH. Catalysis depends on His-42, which acts as the Proton donor. 300-306 lines the substrate pocket; it reads ATTGRAR. GTP-binding positions include Arg-306, 332–334, and 414–416; these read KLD and STG.

Belongs to the adenylosuccinate synthetase family. Homodimer. Mg(2+) serves as cofactor.

It is found in the cytoplasm. The enzyme catalyses IMP + L-aspartate + GTP = N(6)-(1,2-dicarboxyethyl)-AMP + GDP + phosphate + 2 H(+). Its pathway is purine metabolism; AMP biosynthesis via de novo pathway; AMP from IMP: step 1/2. In terms of biological role, plays an important role in the de novo pathway of purine nucleotide biosynthesis. Catalyzes the first committed step in the biosynthesis of AMP from IMP. This chain is Adenylosuccinate synthetase, found in Chromohalobacter salexigens (strain ATCC BAA-138 / DSM 3043 / CIP 106854 / NCIMB 13768 / 1H11).